A 232-amino-acid polypeptide reads, in one-letter code: Ion-translocating oxidoreductase complex subunit E (232 aa).

6 helical membrane-spanning segments follow: residues 18 to 38 (GLVQ…ITNA), 39 to 59 (LGLG…VSLV), 69 to 89 (IPVF…LINA), 93 to 113 (GLYL…IIIG), 127 to 147 (AAFD…VLGA), and 182 to 202 (PFLL…LIAL).

It belongs to the NqrDE/RnfAE family. In terms of assembly, the complex is composed of six subunits: RnfA, RnfB, RnfC, RnfD, RnfE and RnfG.

Its subcellular location is the cell inner membrane. Functionally, part of a membrane-bound complex that couples electron transfer with translocation of ions across the membrane. This Shewanella sp. (strain W3-18-1) protein is Ion-translocating oxidoreductase complex subunit E.